Consider the following 352-residue polypeptide: DNA polymerase IV (352 aa).

In terms of domain architecture, UmuC spans 4 to 185 (IIHVDMDCFF…LPLSKIPGVG (182 aa)). Positions 8 and 103 each coordinate Mg(2+). E104 is an active-site residue.

Belongs to the DNA polymerase type-Y family. In terms of assembly, monomer. Requires Mg(2+) as cofactor.

The protein resides in the cytoplasm. The catalysed reaction is DNA(n) + a 2'-deoxyribonucleoside 5'-triphosphate = DNA(n+1) + diphosphate. In terms of biological role, poorly processive, error-prone DNA polymerase involved in untargeted mutagenesis. Copies undamaged DNA at stalled replication forks, which arise in vivo from mismatched or misaligned primer ends. These misaligned primers can be extended by PolIV. Exhibits no 3'-5' exonuclease (proofreading) activity. May be involved in translesional synthesis, in conjunction with the beta clamp from PolIII. The sequence is that of DNA polymerase IV from Enterobacter sp. (strain 638).